The chain runs to 453 residues: MERTCLAVILAAGDSTRMKSSKSKVLHPVAGRPMIAHVVEAVASAGISSVALVVGRDAEEVAKAASIDGVGIESYLQKDRLGTGHAVLAARDAIAKGYDDILVTYGDVPLQTDAPLKAARQGLADGSDIVVIGFHSDRPTGYGRLLVKDGELIAIREEKDATDAERTVTWCNSGLMAINGRKALDLLSRIGNSNAKGEFYLTDLVEIARSLGGRVTAVDAPEIEMTGCNNRAELAVIERFWQERRRREMMLAGVTMIAPETVFLSYDTIIGQDALIEPNVVFGPGAVIDSGAVIHAFSHIEGAHVSEGATVGPFGRLRPGADLANGAKVGNFCEVKNGRIGEGAKVNHLTYIGDAVVGAGSNIGAGTITCNYDGVNKSETVIGENAFIGSNSSLVAPVTIGDGAYVGSGSVITADVPADALALGRARQEIKPERAKLLRERALAIKAAKRAKA.

The tract at residues Met1–Arg231 is pyrophosphorylase. UDP-N-acetyl-alpha-D-glucosamine-binding positions include Leu10–Gly13, Lys24, Gln77, Gly82–Thr83, Tyr105–Asp107, Gly143, Glu157, Asn172, and Asn229. Residue Asp107 participates in Mg(2+) binding. Asn229 serves as a coordination point for Mg(2+). The tract at residues Ala232 to Ala252 is linker. The segment at Gly253–Ala453 is N-acetyltransferase. The UDP-N-acetyl-alpha-D-glucosamine site is built by Arg318 and Lys336. His348 serves as the catalytic Proton acceptor. Tyr351 and Asn362 together coordinate UDP-N-acetyl-alpha-D-glucosamine. Residues Ala365, Asn371–Tyr372, Ser390, Ser408, and Arg425 each bind acetyl-CoA.

This sequence in the N-terminal section; belongs to the N-acetylglucosamine-1-phosphate uridyltransferase family. In the C-terminal section; belongs to the transferase hexapeptide repeat family. Homotrimer. Requires Mg(2+) as cofactor.

It localises to the cytoplasm. It carries out the reaction alpha-D-glucosamine 1-phosphate + acetyl-CoA = N-acetyl-alpha-D-glucosamine 1-phosphate + CoA + H(+). It catalyses the reaction N-acetyl-alpha-D-glucosamine 1-phosphate + UTP + H(+) = UDP-N-acetyl-alpha-D-glucosamine + diphosphate. The protein operates within nucleotide-sugar biosynthesis; UDP-N-acetyl-alpha-D-glucosamine biosynthesis; N-acetyl-alpha-D-glucosamine 1-phosphate from alpha-D-glucosamine 6-phosphate (route II): step 2/2. Its pathway is nucleotide-sugar biosynthesis; UDP-N-acetyl-alpha-D-glucosamine biosynthesis; UDP-N-acetyl-alpha-D-glucosamine from N-acetyl-alpha-D-glucosamine 1-phosphate: step 1/1. It functions in the pathway bacterial outer membrane biogenesis; LPS lipid A biosynthesis. Catalyzes the last two sequential reactions in the de novo biosynthetic pathway for UDP-N-acetylglucosamine (UDP-GlcNAc). The C-terminal domain catalyzes the transfer of acetyl group from acetyl coenzyme A to glucosamine-1-phosphate (GlcN-1-P) to produce N-acetylglucosamine-1-phosphate (GlcNAc-1-P), which is converted into UDP-GlcNAc by the transfer of uridine 5-monophosphate (from uridine 5-triphosphate), a reaction catalyzed by the N-terminal domain. The polypeptide is Bifunctional protein GlmU (Rhizobium etli (strain CIAT 652)).